A 61-amino-acid chain; its full sequence is Protein TfaX (61 aa).

The protein belongs to the tfa family.

Its function is as follows. Might play a role in cell growth during glycolysis. The chain is Protein TfaX (tfaX) from Escherichia coli (strain K12).